A 138-amino-acid chain; its full sequence is Acidic phospholipase A2 AplTX-I (138 aa).

The first 16 residues, Met1–Gly16, serve as a signal peptide directing secretion. Intrachain disulfides connect Cys42/Cys131, Cys44/Cys60, Cys59/Cys111, Cys65/Cys138, Cys66/Cys104, Cys73/Cys97, and Cys91/Cys102. Ca(2+) contacts are provided by Tyr43, Gly45, and Gly47. Residue His63 is part of the active site. Asp64 is a Ca(2+) binding site. Asp105 is a catalytic residue.

As to quaternary structure, monomer. Ca(2+) serves as cofactor. In terms of tissue distribution, expressed by the venom gland.

The protein localises to the secreted. The enzyme catalyses a 1,2-diacyl-sn-glycero-3-phosphocholine + H2O = a 1-acyl-sn-glycero-3-phosphocholine + a fatty acid + H(+). Its activity is regulated as follows. Inhibited by divalent cations different from calcium ions (cadmium, magnesium, manganese, zinc), since they act as competitive antagonists of this cofactor. Snake venom phospholipase A2 (PLA2) that triggers a high neuromuscular toxicity in chick biventer cervicis preparations, but not in mouse phrenic nerve-diaphragm (PND) preparations, suggesting a selective neurotoxin activity towards birds. Does not induce myotoxic, coagulant, anticoagulant, edema, and antibacterial activities. PLA2 catalyzes the calcium-dependent hydrolysis of the 2-acyl groups in 3-sn-phosphoglycerides. In Agkistrodon piscivorus leucostoma (Western cottonmouth), this protein is Acidic phospholipase A2 AplTX-I.